The sequence spans 269 residues: Regulating synaptic membrane exocytosis protein 4 (269 aa).

One can recognise a C2 domain in the interval 115–233 (PMGDVEIGLQ…DLTTLAVGWY (119 aa)). A phosphoserine mark is found at Ser254 and Ser257.

Binds PPFIA3. Does not bind RAB3.

The protein resides in the synapse. Regulates synaptic membrane exocytosis. This Mus musculus (Mouse) protein is Regulating synaptic membrane exocytosis protein 4 (Rims4).